The following is a 240-amino-acid chain: Ribonuclease HII (240 aa).

Residues 33–222 (GPVAGVDEVG…VRRIVTRSNT (190 aa)) enclose the RNase H type-2 domain. 3 residues coordinate a divalent metal cation: D39, E40, and D131.

This sequence belongs to the RNase HII family. The cofactor is Mn(2+). Mg(2+) is required as a cofactor.

The protein localises to the cytoplasm. It carries out the reaction Endonucleolytic cleavage to 5'-phosphomonoester.. Functionally, endonuclease that specifically degrades the RNA of RNA-DNA hybrids. The chain is Ribonuclease HII from Mycobacterium leprae (strain Br4923).